A 282-amino-acid polypeptide reads, in one-letter code: Heat stress transcription factor A-7b (282 aa).

Low complexity-rich tracts occupy residues M1–S11 and S120–P134. 2 disordered regions span residues M1–A24 and R117–P139. Residues P26–S120 mediate DNA binding. Residues H137–V196 form a hydrophobic repeat HR-A/B region. Residues Q208 to R212 carry the Nuclear localization signal motif. A Nuclear export signal motif is present at residues L232–L240. Residues D259 to N268 carry the AHA motif.

Belongs to the HSF family. Class A subfamily. Homotrimer. In terms of processing, exhibits temperature-dependent phosphorylation.

The protein resides in the cytoplasm. The protein localises to the nucleus. Its function is as follows. Transcriptional activator that specifically binds DNA sequence 5'-AGAAnnTTCT-3' known as heat shock promoter elements (HSE). The sequence is that of Heat stress transcription factor A-7b (HSFA7B) from Arabidopsis thaliana (Mouse-ear cress).